The following is a 637-amino-acid chain: Chaperone protein HtpG (637 aa).

Positions 1–345 (MSQQETHGFQ…SNDLPLNVSR (345 aa)) are a; substrate-binding. The b stretch occupies residues 346–562 (EILQDNHVTK…EGEMSTQMIK (217 aa)). A c region spans residues 563–637 (LMQAAGQPVP…MNQMLLANMK (75 aa)).

Belongs to the heat shock protein 90 family. In terms of assembly, homodimer.

The protein localises to the cytoplasm. Its function is as follows. Molecular chaperone. Has ATPase activity. This Shewanella baltica (strain OS185) protein is Chaperone protein HtpG.